The sequence spans 339 residues: N-acetyl-gamma-glutamyl-phosphate reductase (339 aa).

Cys-145 is a catalytic residue.

It belongs to the NAGSA dehydrogenase family. Type 1 subfamily.

Its subcellular location is the cytoplasm. The enzyme catalyses N-acetyl-L-glutamate 5-semialdehyde + phosphate + NADP(+) = N-acetyl-L-glutamyl 5-phosphate + NADPH + H(+). It functions in the pathway amino-acid biosynthesis; L-arginine biosynthesis; N(2)-acetyl-L-ornithine from L-glutamate: step 3/4. In terms of biological role, catalyzes the NADPH-dependent reduction of N-acetyl-5-glutamyl phosphate to yield N-acetyl-L-glutamate 5-semialdehyde. The sequence is that of N-acetyl-gamma-glutamyl-phosphate reductase from Thermotoga petrophila (strain ATCC BAA-488 / DSM 13995 / JCM 10881 / RKU-1).